Consider the following 630-residue polypeptide: Terpinolene synthase, chloroplastic (630 aa).

The transit peptide at 1 to 52 directs the protein to the chloroplast; it reads MALVSILPLSSKSVLHKSWIVSTYEHKAISRTIPNLGLRGRGKSVTHSLRMS. Mg(2+) contacts are provided by D381, D385, N525, and D533. The short motif at 381–385 is the DDXXD motif element; that stretch reads DDIYD.

This sequence belongs to the terpene synthase family. Tpsd subfamily. Requires Mg(2+) as cofactor. The cofactor is Mn(2+). K(+) serves as cofactor.

The protein localises to the plastid. The protein resides in the chloroplast. The enzyme catalyses (2E)-geranyl diphosphate = terpinolene + diphosphate. It functions in the pathway terpene metabolism; oleoresin biosynthesis. In terms of biological role, involved in defensive oleoresin formation in conifers in response to insect attack or other injury. Involved in monoterpene (C10) olefins biosynthesis. The chain is Terpinolene synthase, chloroplastic (ag9) from Abies grandis (Grand fir).